Reading from the N-terminus, the 439-residue chain is Divalent metal cation transporter MntH 1 (439 aa).

Transmembrane regions (helical) follow at residues 64 to 84, 139 to 161, 171 to 191, 214 to 234, 262 to 282, 300 to 320, 359 to 379, 380 to 400, and 418 to 438; these read FGYALLFVVVLASFSGMLLQS, LLGVSITTGVVLTAFDTLIVLAL, AIVLGLIATIGACFFVELVLI, PLYLAIGILGATVMPHNLYLH, IGSLSLALLVNAAILILAAAA, LLDPLVGGALASFLFGFALLA, LVPALIGVLWLGEAAVGKLLV, LSQVVLSLQLPFALWPLIRFS, and LAWSLFGLISAANLTLLYFWF.

This sequence belongs to the NRAMP family.

The protein resides in the cell inner membrane. Functionally, h(+)-stimulated, divalent metal cation uptake system. This is Divalent metal cation transporter MntH 1 from Pseudomonas aeruginosa (strain ATCC 15692 / DSM 22644 / CIP 104116 / JCM 14847 / LMG 12228 / 1C / PRS 101 / PAO1).